The primary structure comprises 329 residues: Serpentine receptor class alpha-2 (329 aa).

The next 7 helical transmembrane spans lie at 25–45 (FVYLLAIILTFITTYFAVKIL), 57–77 (ILLVQNLFYANLYQFFHGIEA), 104–124 (YYKIILMGSSGMVYGQTGLLI), 144–164 (CAVISILVLICSSSTGRLIVW), 188–208 (HYFTMCAVLSTINFCISTFIL), 240–260 (FLTVSQFVAVFLNSFGMIVLV), and 273–293 (LLVVWLYAFPIVVLMFPVILV).

Belongs to the nematode receptor-like protein sra family.

The protein localises to the membrane. This Caenorhabditis elegans protein is Serpentine receptor class alpha-2 (sra-2).